A 143-amino-acid polypeptide reads, in one-letter code: Sirohydrochlorin cobaltochelatase (143 aa).

The active-site Proton acceptor is the His9. His9 contacts Co(2+). His9 is a binding site for Ni(2+). Residues Glu45 and 70-75 contribute to the substrate site; that span reads LAHGIH. His75 serves as a coordination point for Co(2+). His75 is a binding site for Ni(2+).

The protein belongs to the CbiX family. CbiXS subfamily. As to quaternary structure, homotetramer; dimer of dimers.

It carries out the reaction Co-sirohydrochlorin + 2 H(+) = sirohydrochlorin + Co(2+). The enzyme catalyses Ni-sirohydrochlorin + 2 H(+) = sirohydrochlorin + Ni(2+). It participates in cofactor biosynthesis; adenosylcobalamin biosynthesis; cob(II)yrinate a,c-diamide from sirohydrochlorin (anaerobic route): step 1/10. In terms of biological role, catalyzes the insertion of Co(2+) into sirohydrochlorin as part of the anaerobic pathway to cobalamin biosynthesis. Involved in the biosynthesis of the unique nickel-containing tetrapyrrole coenzyme F430, the prosthetic group of methyl-coenzyme M reductase (MCR), which plays a key role in methanogenesis and anaerobic methane oxidation. Catalyzes the insertion of Ni(2+) into sirohydrochlorin to yield Ni-sirohydrochlorin. This Methanocaldococcus jannaschii (strain ATCC 43067 / DSM 2661 / JAL-1 / JCM 10045 / NBRC 100440) (Methanococcus jannaschii) protein is Sirohydrochlorin cobaltochelatase.